The chain runs to 396 residues: Serine/threonine-protein kinase VRK1 (396 aa).

Residues 37–317 enclose the Protein kinase domain; sequence WKLGSPIGQG…LLDYVEKPLY (281 aa). ATP contacts are provided by residues 43-51 and Lys71; that span reads IGQGGFGCI. Lys71 participates in a covalent cross-link: Glycyl lysine isopeptide (Lys-Gly) (interchain with G-Cter in SUMO2). The active-site Proton acceptor is the Asp177. The disordered stretch occupies residues 352–396; the sequence is KPVAKKRKKEAEESVESSVEDMECSDKQTEEATQTRSKTRKRVQK. The span at 364–374 shows a compositional bias: acidic residues; the sequence is ESVESSVEDME. Ser376 bears the Phosphoserine mark. A required for interaction with the nucleosome region spans residues 387-393; sequence RSKTRKR.

Belongs to the protein kinase superfamily. CK1 Ser/Thr protein kinase family. VRK subfamily. In terms of assembly, interacts with HDAC1, KAT2B, SETDB1, KDM3A and KDM4A. Associates with the nucleosome through interactions with nucleosome DNA, histone H2A and histone H2B; the interaction with H2A and H2B is mediated by the nucleosome acidic patch, a cluster of negatively charged residues of H2A and H2B forming a cleft within the nucleosome core. Post-translationally, autophosphorylated at various serine and threonine residues. Autophosphorylation does not impair its ability to phosphorylate p53/TP53. Phosphorylation by PLK3 leads to induction of Golgi fragmentation during mitosis.

The protein resides in the nucleus. The protein localises to the cytoplasm. Its subcellular location is the cajal body. The enzyme catalyses L-seryl-[protein] + ATP = O-phospho-L-seryl-[protein] + ADP + H(+). The catalysed reaction is L-threonyl-[protein] + ATP = O-phospho-L-threonyl-[protein] + ADP + H(+). Active in presence of Mn(2+), Mg(2+) and Zn(2+), but is not functional with Ca(2+) or Cu(2+). Has a higher affinity for Mn(2+) than for Mg(2+). RAN inhibits its autophosphorylation and its ability to phosphorylate histone H3. Functionally, serine/threonine kinase involved in the regulation of key cellular processes including the cell cycle, nuclear condensation, transcription regulation, and DNA damage response. Controls chromatin organization and remodeling by mediating phosphorylation of histone H3 on 'Thr-4' and histone H2AX (H2aXT4ph). It also phosphorylates KAT5 in response to DNA damage, promoting KAT5 association with chromatin and histone acetyltransferase activity. Is involved in the regulation of cell cycle progression of neural progenitors, and is required for proper cortical neuronal migration. Is involved in neurite elongation and branching in motor neurons, and has an essential role in Cajal bodies assembly, acting through COIL phosphorylation and the control of coilin degradation. Involved in Golgi disassembly during the cell cycle: following phosphorylation by PLK3 during mitosis, it is required to induce Golgi fragmentation. Phosphorylates BANF1: disrupts its ability to bind DNA, reduces its binding to LEM domain-containing proteins and causes its relocalization from the nucleus to the cytoplasm. Phosphorylates TP53BP1 and p53/TP53 on 'Thr-18', preventing the interaction between p53/TP53 and MDM2. Phosphorylates ATF2 which activates its transcriptional activity. Phosphorylates JUN. This Bos taurus (Bovine) protein is Serine/threonine-protein kinase VRK1 (VRK1).